Here is a 304-residue protein sequence, read N- to C-terminus: Non-specific ribonucleoside hydrolase RihC (304 aa).

His233 is a catalytic residue.

Belongs to the IUNH family. RihC subfamily.

Functionally, hydrolyzes both purine and pyrimidine ribonucleosides with a broad-substrate specificity. This chain is Non-specific ribonucleoside hydrolase RihC, found in Escherichia coli O139:H28 (strain E24377A / ETEC).